The chain runs to 384 residues: Putative sarcosine oxidase (384 aa).

6–36 (DVVVVGAGIFGSCTAYNCQKIGLKTLLLEQF) is an FAD binding site. C315 carries the S-8alpha-FAD cysteine modification.

Belongs to the MSOX/MTOX family. FAD is required as a cofactor.

The enzyme catalyses sarcosine + O2 + H2O = formaldehyde + glycine + H2O2. The sequence is that of Putative sarcosine oxidase from Caenorhabditis elegans.